The primary structure comprises 279 residues: Pantothenate synthetase (279 aa).

27 to 34 (MGYLHEGH) serves as a coordination point for ATP. Histidine 34 serves as the catalytic Proton donor. Residue glutamine 58 participates in (R)-pantoate binding. Glutamine 58 serves as a coordination point for beta-alanine. 144 to 147 (GKKD) provides a ligand contact to ATP. (R)-pantoate is bound at residue glutamine 150. ATP contacts are provided by residues valine 173 and 181–184 (MSSR).

The protein belongs to the pantothenate synthetase family. As to quaternary structure, homodimer.

The protein resides in the cytoplasm. It catalyses the reaction (R)-pantoate + beta-alanine + ATP = (R)-pantothenate + AMP + diphosphate + H(+). It participates in cofactor biosynthesis; (R)-pantothenate biosynthesis; (R)-pantothenate from (R)-pantoate and beta-alanine: step 1/1. Its function is as follows. Catalyzes the condensation of pantoate with beta-alanine in an ATP-dependent reaction via a pantoyl-adenylate intermediate. This chain is Pantothenate synthetase, found in Geobacter sp. (strain M21).